The chain runs to 668 residues: Golgin candidate 2 (668 aa).

The segment at glutamine 22–arginine 317 is disordered. Positions serine 26 to valine 39 are enriched in basic and acidic residues. 2 stretches are compositionally biased toward polar residues: residues glycine 64 to serine 86 and serine 100 to leucine 113. 2 stretches are compositionally biased toward low complexity: residues serine 123 to serine 141 and serine 168 to glycine 178. 3 stretches are compositionally biased toward basic and acidic residues: residues threonine 184 to proline 207, threonine 215 to alanine 237, and glycine 250 to arginine 259. Over residues aspartate 290 to threonine 302 the composition is skewed to acidic residues. Positions aspartate 303–glutamate 312 are enriched in basic and acidic residues. A coiled-coil region spans residues alanine 331–lysine 539. 2 helical membrane-spanning segments follow: residues lysine 594 to leucine 614 and isoleucine 622 to histidine 642.

The protein resides in the golgi apparatus membrane. In terms of biological role, golgi matrix protein playing a role in tethering of vesicles to Golgi membranes and in maintaining the overall structure of the Golgi apparatus. The polypeptide is Golgin candidate 2 (GC2) (Arabidopsis thaliana (Mouse-ear cress)).